The chain runs to 128 residues: Large ribosomal subunit protein bL17 (128 aa).

It belongs to the bacterial ribosomal protein bL17 family. In terms of assembly, part of the 50S ribosomal subunit. Contacts protein L32.

This Streptococcus agalactiae serotype Ia (strain ATCC 27591 / A909 / CDC SS700) protein is Large ribosomal subunit protein bL17.